The sequence spans 290 residues: Ribosomal protein L11 methyltransferase (290 aa).

Residues threonine 135, glycine 158, aspartate 180, and asparagine 227 each contribute to the S-adenosyl-L-methionine site.

The protein belongs to the methyltransferase superfamily. PrmA family.

The protein resides in the cytoplasm. The catalysed reaction is L-lysyl-[protein] + 3 S-adenosyl-L-methionine = N(6),N(6),N(6)-trimethyl-L-lysyl-[protein] + 3 S-adenosyl-L-homocysteine + 3 H(+). Functionally, methylates ribosomal protein L11. This chain is Ribosomal protein L11 methyltransferase, found in Chelativorans sp. (strain BNC1).